The following is an 80-amino-acid chain: Defensin-like protein 204 (80 aa).

The first 29 residues, 1–29, serve as a signal peptide directing secretion; the sequence is MAKTFSSICFTTLLLVVLFISTEIPKSEA. Intrachain disulfides connect C43-C64, C48-C73, and C52-C75.

It belongs to the DEFL family.

It localises to the secreted. The chain is Defensin-like protein 204 from Arabidopsis thaliana (Mouse-ear cress).